The chain runs to 284 residues: Tropomyosin, smooth muscle/fibroblast CTM1 (284 aa).

A coiled-coil region spans residues 1–284 (MEAIKKKMTM…DVTLQGIGDL (284 aa)). The segment at 18-38 (AIDRAEQAETDKKSAEDKATG) is disordered.

Belongs to the tropomyosin family. As to quaternary structure, homodimer. In terms of tissue distribution, predominantly expressed in body wall muscle and heart, low in intestine, ovary and larval tail muscle.

Its function is as follows. The function of tropomyosin in smooth muscle and non-muscle cells is not clear. The protein is Tropomyosin, smooth muscle/fibroblast CTM1 (CTM1) of Ciona intestinalis (Transparent sea squirt).